The following is a 278-amino-acid chain: Pantothenate synthetase (278 aa).

An ATP-binding site is contributed by 30 to 37 (MGFLHEGH). Residue His-37 is the Proton donor of the active site. Gln-61 contacts (R)-pantoate. Gln-61 contributes to the beta-alanine binding site. 147 to 150 (GQKD) serves as a coordination point for ATP. Gln-153 is a binding site for (R)-pantoate. ATP is bound by residues Val-176 and 184 to 187 (LSSR).

This sequence belongs to the pantothenate synthetase family. In terms of assembly, homodimer.

It is found in the cytoplasm. The catalysed reaction is (R)-pantoate + beta-alanine + ATP = (R)-pantothenate + AMP + diphosphate + H(+). It functions in the pathway cofactor biosynthesis; (R)-pantothenate biosynthesis; (R)-pantothenate from (R)-pantoate and beta-alanine: step 1/1. Catalyzes the condensation of pantoate with beta-alanine in an ATP-dependent reaction via a pantoyl-adenylate intermediate. This Thermosipho africanus (strain TCF52B) protein is Pantothenate synthetase.